Here is a 166-residue protein sequence, read N- to C-terminus: Transcription antitermination protein NusB (166 aa).

Residues 1 to 18 are compositionally biased toward basic and acidic residues; sequence MISDESDRFNPRDPKPAD. A disordered region spans residues 1–28; that stretch reads MISDESDRFNPRDPKPADAGKPSKSAKR.

It belongs to the NusB family.

Involved in transcription antitermination. Required for transcription of ribosomal RNA (rRNA) genes. Binds specifically to the boxA antiterminator sequence of the ribosomal RNA (rrn) operons. This is Transcription antitermination protein NusB from Pseudomonas putida (strain W619).